Reading from the N-terminus, the 222-residue chain is MKLLAPSILAGDWWCIGEQIQATIRGGADILHYDVMDGHFVPNITAGYEILSHIRKRASLPIDAHLMIENPDKYIPKFVEAGANWISVHIENNYHIHRTLQLIKELGAKAGVVVNPGTSLSAIEEALYYADYVLLMSVNPGFSGQKFIERSIERLRILKEMRDRINPSCLIEIDGGIKENNIAEVVRAGADVVVVGSGIFGAKDIEAQTRKLKSLMLSAVSV.

Serine 7 serves as a coordination point for substrate. Residues histidine 32, aspartate 34, and histidine 65 each coordinate a divalent metal cation. Aspartate 34 (proton acceptor) is an active-site residue. Residues histidine 65, 141–144 (GFSG), 174–176 (DGG), and 196–197 (GS) each bind substrate. Aspartate 174 provides a ligand contact to a divalent metal cation. Aspartate 174 serves as the catalytic Proton donor.

It belongs to the ribulose-phosphate 3-epimerase family. A divalent metal cation serves as cofactor.

It catalyses the reaction D-ribulose 5-phosphate = D-xylulose 5-phosphate. It participates in carbohydrate degradation. In terms of biological role, catalyzes the reversible epimerization of D-ribulose 5-phosphate to D-xylulose 5-phosphate. This chain is Ribulose-phosphate 3-epimerase, found in Aquifex aeolicus (strain VF5).